A 413-amino-acid chain; its full sequence is Zona pellucida-like domain-containing protein 1 (413 aa).

The first 19 residues, 1–19, serve as a signal peptide directing secretion; the sequence is MEQICLIILLISKALSVGA. At Gln-20 the chain carries Pyrrolidone carboxylic acid. Residues 20 to 370 lie on the Extracellular side of the membrane; sequence QFNGYNCDAN…PVFRMNTVTS (351 aa). One can recognise a ZP domain in the interval 43 to 320; it reads YCGVQTITLK…PICGSRKKRD (278 aa). Disulfide bonds link Cys-44/Cys-155 and Cys-79/Cys-104. 6 N-linked (GlcNAc...) asparagine glycosylation sites follow: Asn-85, Asn-121, Asn-129, Asn-164, Asn-181, and Asn-194. 2 disulfides stabilise this stretch: Cys-235/Cys-296 and Cys-255/Cys-313. The N-linked (GlcNAc...) asparagine glycan is linked to Asn-351. A helical transmembrane segment spans residues 371-391; that stretch reads ALISGIIILGVMSLCFFILSL. Residues 392–413 lie on the Cytoplasmic side of the membrane; that stretch reads TLLKGKRAPPTILSGARNPAFN.

Post-translationally, proteolytically cleaved before the transmembrane segment to yield the secreted form found in the extracellular matrix of the cupula. In terms of processing, N-glycosylated. As to expression, detected in the acellular cupulae of the vestibular organ, and also in support cells adjacent to the cupula (at protein level).

It is found in the cytoplasmic vesicle membrane. Its subcellular location is the secreted. The protein resides in the extracellular space. The protein localises to the extracellular matrix. Functionally, glycoprotein which is a component of the gelatinous extracellular matrix in the cupulae of the vestibular organ. This chain is Zona pellucida-like domain-containing protein 1, found in Salmo salar (Atlantic salmon).